Consider the following 744-residue polypeptide: Collagen alpha-1(VIII) chain (744 aa).

A signal peptide spans 1 to 24; that stretch reads MAVPPRPLQLLGILFIISLNSVRL. The segment at 29 to 118 is nonhelical region (NC2); it reads AYYGIKPLPP…KGEVPLASLR (90 aa). A compositionally biased stretch (basic and acidic residues) spans 101-110; sequence KEVVPKKGKG. Disordered stretches follow at residues 101–395, 412–439, and 457–590; these read KEVV…EPGL, GPKG…GFPG, and GPIG…DMGL. Residues 119–572 form a triple-helical region (COL1) region; the sequence is GEQGPRGEPG…PGPPGPPGPP (454 aa). Over residues 129–138 the composition is skewed to pro residues; it reads PRGPPGPPGL. Residues 169 to 191 are compositionally biased toward low complexity; sequence KPGAMGMPGAKGEIGPKGEIGPM. The segment covering 204-218 has biased composition (gly residues); sequence GLPGIGKPGGPGLPG. The span at 298–307 shows a compositional bias: low complexity; that stretch reads PQGLIGVPGV. Gly residues-rich tracts occupy residues 329-338 and 412-421; these read GFPGGKGEQG and GPKGEGGVVG. Low complexity-rich tracts occupy residues 470–507 and 548–557; these read LPGL…VGPS and PGALGPQGQP. Residues 559–579 show a composition bias toward pro residues; it reads LPGPPGPPGPPGPPAVMPTPS. Residues 573 to 744 are nonhelical region (NC1); the sequence is AVMPTPSPQG…SFSGYLLYPM (172 aa). Residues 611–744 form the C1q domain; it reads PAYEMPAFTA…SFSGYLLYPM (134 aa).

In terms of assembly, homotrimers, or heterotrimers in association with alpha 2(VIII) type collagens. Four homotrimers can form a tetrahedron stabilized by central interacting C-terminal NC1 trimers. In terms of processing, prolines at the third position of the tripeptide repeating unit (G-X-Y) are hydroxylated in some or all of the chains. Post-translationally, proteolytically cleaved by neutrophil elastase, in vitro. Proteolytic processing produces the C-terminal NC1 domain fragment, vastatin. As to expression, high levels in calvarium, eye and skin of newborn mice; also in various epithelial, endothelial and mesenchymal cells.

It is found in the secreted. The protein resides in the extracellular space. The protein localises to the extracellular matrix. Its subcellular location is the basement membrane. Functionally, macromolecular component of the subendothelium. Major component of the Descemet's membrane (basement membrane) of corneal endothelial cells. Also a component of the endothelia of blood vessels. Necessary for migration and proliferation of vascular smooth muscle cells and thus, has a potential role in the maintenance of vessel wall integrity and structure, in particular in atherogenesis. In terms of biological role, vastatin, the C-terminal fragment comprising the NC1 domain, inhibits aortic endothelial cell proliferation and causes cell apoptosis. The chain is Collagen alpha-1(VIII) chain (Col8a1) from Mus musculus (Mouse).